The primary structure comprises 405 residues: Obg-like ATPase homolog (405 aa).

In terms of domain architecture, OBG-type G spans 17–283 (PTSGIVGLAN…CKGIASEYFD (267 aa)). Residues 26-31 (NVGKST) and V231 contribute to the ATP site. Residues 312-398 (NLISFFTCGP…QDNDIALFKA (87 aa)) form the TGS domain.

Belongs to the TRAFAC class OBG-HflX-like GTPase superfamily. OBG GTPase family.

It localises to the mitochondrion. In terms of biological role, hydrolyzes ATP, and can also hydrolyze GTP with lower efficiency. Has lower affinity for GTP. The chain is Obg-like ATPase homolog (YLF2) from Saccharomyces cerevisiae (strain ATCC 204508 / S288c) (Baker's yeast).